An 856-amino-acid polypeptide reads, in one-letter code: Inactive rhomboid protein 1 (856 aa).

A disordered region spans residues 1–21 (MGEARRDSSSSLQHKKPPWLK). Topologically, residues 1–412 (MGEARRDSSS…HRPFFTYWLT (412 aa)) are cytoplasmic. 2 positions are modified to phosphoserine: serine 76 and serine 176. 2 positions are modified to phosphothreonine: threonine 180 and threonine 183. At serine 391 the chain carries Phosphoserine. A helical transmembrane segment spans residues 413 to 433 (FVHSLVTILAVCIYGVAPVGF). Topologically, residues 434–656 (SQHETVDSVL…NPEVPDQFYR (223 aa)) are lumenal. An N-linked (GlcNAc...) asparagine glycan is attached at asparagine 584. The chain crosses the membrane as a helical span at residues 657-677 (LWLSLFLHAGVLHCLVSVCFQ). At 678-692 (MTVLRDLEKLAGWHR) the chain is on the cytoplasmic side. The chain crosses the membrane as a helical span at residues 693–713 (IAIIYLLSGVTGNLASAIFLP). Topologically, residues 714–715 (YR) are lumenal. The helical transmembrane segment at 716 to 736 (AEVGPAGSQFGILACLFVELF) threads the bilayer. Residues 737–747 (QSWQILARPWR) are Cytoplasmic-facing. A helical transmembrane segment spans residues 748–768 (AFFKLLAVVLFLFTFGLLPWI). Topologically, residues 769–773 (DNFAH) are lumenal. Residues 774-794 (ISGFISGLFLSFAFLPYISFG) traverse the membrane as a helical segment. At 795-804 (KFDLYRKRCQ) the chain is on the cytoplasmic side. A helical transmembrane segment spans residues 805–825 (IIVFQLVFLGLLAGLVVLFYF). Topologically, residues 826-856 (YPVRCEWCEFLTCIPFTDKFCEKYELDAQLH) are lumenal.

Belongs to the peptidase S54 family. In terms of assembly, homodimer, or homooligomer. Interacts with TGFA and HBEGF. Interacts with EGF; may retain EGF in the endoplasmic reticulum and regulates its degradation through the endoplasmic reticulum-associated degradation (ERAD). Interacts (via cytoplasmic N-terminus) with FRMD8/iTAP; this interaction leads to mutual protein stabilization. Interacts with ADAM17/TACE.

It localises to the endoplasmic reticulum membrane. It is found in the golgi apparatus membrane. Its function is as follows. Regulates ADAM17 protease, a sheddase of the epidermal growth factor (EGF) receptor ligands and TNF, thereby plays a role in sleep, cell survival, proliferation, migration and inflammation. Does not exhibit any protease activity on its own. The chain is Inactive rhomboid protein 1 (RHBDF1) from Bos taurus (Bovine).